The primary structure comprises 97 residues: High mobility group protein homolog NHP1 (97 aa).

The segment at 1–24 is disordered; the sequence is MAGASDRTGVRRPRKAKKDPNAPK. Residues 23-93 constitute a DNA-binding region (HMG box); that stretch reads PKRALSSYMF…RYEREKAEYA (71 aa).

It localises to the nucleus. In Babesia bovis, this protein is High mobility group protein homolog NHP1.